A 245-amino-acid chain; its full sequence is Probable phosphatase KPN78578_10290 (245 aa).

Positions 7, 9, 15, 40, 73, 101, 131, 192, and 194 each coordinate Zn(2+).

The protein belongs to the PHP family. As to quaternary structure, homotrimer. The cofactor is Zn(2+).

The chain is Probable phosphatase KPN78578_10290 from Klebsiella pneumoniae subsp. pneumoniae (strain ATCC 700721 / MGH 78578).